A 405-amino-acid chain; its full sequence is Acetylornithine aminotransferase 1 (405 aa).

Pyridoxal 5'-phosphate-binding positions include Gly108–Ala109 and Phe141. Residue Arg144 coordinates N(2)-acetyl-L-ornithine. Asp226–Gln229 contributes to the pyridoxal 5'-phosphate binding site. Lys255 carries the N6-(pyridoxal phosphate)lysine modification. Thr283 lines the N(2)-acetyl-L-ornithine pocket. A pyridoxal 5'-phosphate-binding site is contributed by Thr284.

Belongs to the class-III pyridoxal-phosphate-dependent aminotransferase family. ArgD subfamily. In terms of assembly, homodimer. Pyridoxal 5'-phosphate is required as a cofactor.

The protein localises to the cytoplasm. The catalysed reaction is N(2)-acetyl-L-ornithine + 2-oxoglutarate = N-acetyl-L-glutamate 5-semialdehyde + L-glutamate. It functions in the pathway amino-acid biosynthesis; L-arginine biosynthesis; N(2)-acetyl-L-ornithine from L-glutamate: step 4/4. This chain is Acetylornithine aminotransferase 1, found in Pseudomonas syringae pv. tomato (strain ATCC BAA-871 / DC3000).